The primary structure comprises 672 residues: Ubiquitin carboxyl-terminal hydrolase 19 (672 aa).

Residues 11-31 (NSFTQLILTLFFVSIGLLYFV) form a helical membrane-spanning segment. Zn(2+) is bound by residues cysteine 64, cysteine 67, cysteine 75, cysteine 78, cysteine 84, cysteine 88, histidine 97, and cysteine 101. The MYND-type zinc-finger motif lies at 64-101 (CSVCGKATTKKCSRCKSVRYCSAACQTSDWKSGHKLKC). The region spanning 174 to 480 (CGLTNCGNSC…RAYMLLYSRV (307 aa)) is the USP domain. Cysteine 183 acts as the Nucleophile in catalysis. Histidine 439 (proton acceptor) is an active-site residue. The disordered stretch occupies residues 484 to 672 (PSNLRSEESQ…HSDTEMIDAQ (189 aa)). Positions 488-499 (RSEESQDEKKTD) are enriched in basic and acidic residues. The span at 500–527 (TLNTESNQDGSVESSGVGTNDTSVSSLC) shows a compositional bias: polar residues. Basic and acidic residues-rich tracts occupy residues 533–543 (HSEDPEYEKES) and 553–594 (EEGK…KEDP). The segment covering 606 to 615 (LDITTPSPSA) has biased composition (polar residues). Positions 623–666 (ENERSDTESKPLEKEHSDTESNKPLEKEHLDSESKPLEKEHSDT) are enriched in basic and acidic residues.

Belongs to the peptidase C19 family.

The protein localises to the membrane. The enzyme catalyses Thiol-dependent hydrolysis of ester, thioester, amide, peptide and isopeptide bonds formed by the C-terminal Gly of ubiquitin (a 76-residue protein attached to proteins as an intracellular targeting signal).. Recognizes and hydrolyzes the peptide bond at the C-terminal Gly of ubiquitin. Involved in the processing of poly-ubiquitin precursors as well as that of ubiquitinated proteins. The chain is Ubiquitin carboxyl-terminal hydrolase 19 (UBP19) from Arabidopsis thaliana (Mouse-ear cress).